The sequence spans 473 residues: Ribulose bisphosphate carboxylase large chain 1 (473 aa).

Asparagine 116 and threonine 166 together coordinate substrate. Lysine 168 functions as the Proton acceptor in the catalytic mechanism. Lysine 170 is a substrate binding site. Positions 194, 196, and 197 each coordinate Mg(2+). The residue at position 194 (lysine 194) is an N6-carboxylysine. Histidine 287 serves as the catalytic Proton acceptor. Residues arginine 288, histidine 320, and serine 372 each coordinate substrate.

It belongs to the RuBisCO large chain family. Type I subfamily. As to quaternary structure, heterohexadecamer of 8 large chains and 8 small chains. Requires Mg(2+) as cofactor.

It catalyses the reaction 2 (2R)-3-phosphoglycerate + 2 H(+) = D-ribulose 1,5-bisphosphate + CO2 + H2O. It carries out the reaction D-ribulose 1,5-bisphosphate + O2 = 2-phosphoglycolate + (2R)-3-phosphoglycerate + 2 H(+). Its function is as follows. RuBisCO catalyzes two reactions: the carboxylation of D-ribulose 1,5-bisphosphate, the primary event in carbon dioxide fixation, as well as the oxidative fragmentation of the pentose substrate. Both reactions occur simultaneously and in competition at the same active site. In Nitrobacter winogradskyi (strain ATCC 25391 / DSM 10237 / CIP 104748 / NCIMB 11846 / Nb-255), this protein is Ribulose bisphosphate carboxylase large chain 1.